Here is a 102-residue protein sequence, read N- to C-terminus: Small ribosomal subunit protein uS10 (102 aa).

This sequence belongs to the universal ribosomal protein uS10 family. As to quaternary structure, part of the 30S ribosomal subunit.

In terms of biological role, involved in the binding of tRNA to the ribosomes. The sequence is that of Small ribosomal subunit protein uS10 from Cenarchaeum symbiosum (strain A).